The sequence spans 847 residues: Histidine decarboxylase (847 aa).

Residues Phe80 and His193 each coordinate substrate. Position 304 is an N6-(pyridoxal phosphate)lysine (Lys304). A compositionally biased stretch (polar residues) spans 575–605; that stretch reads GNGATRTSTTNSYGHTTSAAQANSERQASIQ. Disordered stretches follow at residues 575–662, 769–798, and 813–847; these read GNGA…RSSP, QSQS…MSSL, and SQPM…MESL. The segment covering 606–616 has biased composition (acidic residues); that stretch reads EDNEESPEETE. 2 stretches are compositionally biased toward low complexity: residues 634-657 and 769-787; these read SLST…TQSS and QSQS…LSGG. Positions 832–847 are enriched in polar residues; that stretch reads DSDATVCSTTSSMESL.

Belongs to the group II decarboxylase family. As to quaternary structure, homodimer. The cofactor is pyridoxal 5'-phosphate. Localized primarily to the photoreceptors, in the eye.

The enzyme catalyses L-histidine + H(+) = histamine + CO2. Functionally, required in photoreceptor transmitter synthesis. Catlayzes the conversion of L-histidine to histamine. In Drosophila melanogaster (Fruit fly), this protein is Histidine decarboxylase (Hdc).